A 111-amino-acid polypeptide reads, in one-letter code: MPANARSNAVLTTESKVTIRGQTTIPAPVREALKLKPGLDSIHYEILPGGQVFMCRLGDEQEDHTMNAFLRFLDADIQNNPQKTRPFDIQQGKKLVAGMDVNIDDEIGDDE.

Positions 12–59 constitute a SpoVT-AbrB domain; sequence TTESKVTIRGQTTIPAPVREALKLKPGLDSIHYEILPGGQVFMCRLGD.

Homodimer; forms a complex with YhaV with stoichiometry PrlF(2)-YhaV(4), possibly as a YhaV(2)-PrlF(2)-YhaV(2) complex like the MazFE complex.

It localises to the cytoplasm. Functionally, antitoxin component of a type II toxin-antitoxin (TA) system. Labile antitoxin that binds to the YhaV toxin and neutralizes its ribonuclease activity. Also acts as a transcription factor. The YhaV/PrlF complex binds the prlF-yhaV operon, probably negatively regulating its expression. The sequence is that of Antitoxin PrlF (prlF) from Escherichia coli O6:H1 (strain CFT073 / ATCC 700928 / UPEC).